The sequence spans 296 residues: 4-hydroxy-tetrahydrodipicolinate synthase (296 aa).

Threonine 45 contacts pyruvate. The Proton donor/acceptor role is filled by tyrosine 133. Lysine 161 (schiff-base intermediate with substrate) is an active-site residue. Isoleucine 203 contacts pyruvate.

This sequence belongs to the DapA family. As to quaternary structure, homotetramer; dimer of dimers.

Its subcellular location is the cytoplasm. It carries out the reaction L-aspartate 4-semialdehyde + pyruvate = (2S,4S)-4-hydroxy-2,3,4,5-tetrahydrodipicolinate + H2O + H(+). It participates in amino-acid biosynthesis; L-lysine biosynthesis via DAP pathway; (S)-tetrahydrodipicolinate from L-aspartate: step 3/4. Functionally, catalyzes the condensation of (S)-aspartate-beta-semialdehyde [(S)-ASA] and pyruvate to 4-hydroxy-tetrahydrodipicolinate (HTPA). The chain is 4-hydroxy-tetrahydrodipicolinate synthase from Idiomarina loihiensis (strain ATCC BAA-735 / DSM 15497 / L2-TR).